The primary structure comprises 565 residues: NAD-dependent malic enzyme (565 aa).

Tyr-104 functions as the Proton donor in the catalytic mechanism. Arg-157 provides a ligand contact to NAD(+). The active-site Proton acceptor is the Lys-175. Positions 246, 247, and 270 each coordinate a divalent metal cation. NAD(+) is bound by residues Asp-270 and Asn-418.

This sequence belongs to the malic enzymes family. Homotetramer. The cofactor is Mg(2+). Mn(2+) is required as a cofactor.

The enzyme catalyses (S)-malate + NAD(+) = pyruvate + CO2 + NADH. It carries out the reaction oxaloacetate + H(+) = pyruvate + CO2. The protein is NAD-dependent malic enzyme of Enterobacter sp. (strain 638).